Consider the following 450-residue polypeptide: Phosphoglucosamine mutase (450 aa).

Serine 103 functions as the Phosphoserine intermediate in the catalytic mechanism. Mg(2+) contacts are provided by serine 103, aspartate 243, aspartate 245, and aspartate 247. A Phosphoserine modification is found at serine 103.

This sequence belongs to the phosphohexose mutase family. It depends on Mg(2+) as a cofactor. Activated by phosphorylation.

It catalyses the reaction alpha-D-glucosamine 1-phosphate = D-glucosamine 6-phosphate. In terms of biological role, catalyzes the conversion of glucosamine-6-phosphate to glucosamine-1-phosphate. The chain is Phosphoglucosamine mutase from Latilactobacillus sakei subsp. sakei (strain 23K) (Lactobacillus sakei subsp. sakei).